Here is a 668-residue protein sequence, read N- to C-terminus: Eukaryotic translation initiation factor 3 subunit L (668 aa).

Positions 1–17 are enriched in polar residues; sequence MVADASQQGQSNGAAFN. The segment at 1–42 is disordered; sequence MVADASQQGQSNGAAFNQQQQYQQQQQRQLFGGEEEFGDEEE. Positions 18-32 are enriched in low complexity; sequence QQQQYQQQQQRQLFG. A compositionally biased stretch (acidic residues) spans 33–42; the sequence is GEEEFGDEEE. In terms of domain architecture, PCI spans 358 to 552; the sequence is SFTHILVFIM…QVVNTSDLDF (195 aa). Residues 625-668 form a disordered region; sequence AGVKAGPPAFSQRSGGAGRSSVNKSAPAPAGAWGSSKPQPSVTA. Residues 648–662 are compositionally biased toward low complexity; sequence KSAPAPAGAWGSSKP.

It belongs to the eIF-3 subunit L family. In terms of assembly, component of the eukaryotic translation initiation factor 3 (eIF-3) complex.

Its subcellular location is the cytoplasm. Its function is as follows. Component of the eukaryotic translation initiation factor 3 (eIF-3) complex, which is involved in protein synthesis of a specialized repertoire of mRNAs and, together with other initiation factors, stimulates binding of mRNA and methionyl-tRNAi to the 40S ribosome. The eIF-3 complex specifically targets and initiates translation of a subset of mRNAs involved in cell proliferation. In Mycosarcoma maydis (Corn smut fungus), this protein is Eukaryotic translation initiation factor 3 subunit L.